Consider the following 283-residue polypeptide: Cardiolipin synthase (CMP-forming) (283 aa).

The next 3 helical transmembrane spans lie at 83 to 103, 155 to 175, and 209 to 229; these read PFIGLFIITNNLTPALGLFAF, VSIAAIILGRDVLLAISALFI, and LSKWNTFFQMVYLGSGVLLLL.

The protein belongs to the CDP-alcohol phosphatidyltransferase class-I family. In terms of assembly, may be found in a large complex. Mg(2+) serves as cofactor.

It is found in the mitochondrion inner membrane. It carries out the reaction a CDP-1,2-diacyl-sn-glycerol + a 1,2-diacyl-sn-glycero-3-phospho-(1'-sn-glycerol) = a cardiolipin + CMP + H(+). Functionally, catalyzes the synthesis of cardiolipin (CL) (diphosphatidylglycerol) by specifically transferring a phosphatidyl group from CDP-diacylglycerol to phosphatidylglycerol (PG). CL is a key phospholipid in mitochondrial membranes and plays important roles in maintaining the functional integrity and dynamics of mitochondria under both optimal and stress conditions. The sequence is that of Cardiolipin synthase (CMP-forming) (CRD1) from Saccharomyces cerevisiae (strain ATCC 204508 / S288c) (Baker's yeast).